Here is a 682-residue protein sequence, read N- to C-terminus: Amphiphysin (682 aa).

Coiled-coil stretches lie at residues 10–84 and 144–191; these read AKNV…LHEV and DYDS…QEEL. The BAR domain maps to 24–240; the sequence is VLQKLGKADE…MTKLGDQHAD (217 aa). Disordered stretches follow at residues 244–310, 446–470, 501–530, and 561–606; these read TIQG…PKLT, ILAE…ETTG, GAVR…QEKV, and AAAE…ASDM. The segment covering 261 to 274 has biased composition (pro residues); it reads PSPPEEVSPLPSPT. Positions 503-527 are enriched in basic and acidic residues; that stretch reads VRTEQEAAAEGDKPQGEEKDVDVSQ. Positions 567-596 are enriched in polar residues; sequence TQGTDSETSQIGSEQKATEEIQTTPSQDQP. The 74-residue stretch at 609-682 folds into the SH3 domain; it reads GFLFKVEVLH…FPENFTRHLE (74 aa).

Heterodimer with BIN1. Binds SH3GLB1. Is abundant in the forebrain and cerebellum. It is also found in the adrenal gland, anterior and posterior pituitary.

It localises to the cytoplasmic vesicle. The protein localises to the secretory vesicle. Its subcellular location is the synaptic vesicle membrane. The protein resides in the cytoplasm. It is found in the cytoskeleton. Functionally, may participate in mechanisms of regulated exocytosis in synapses and certain endocrine cell types. May control the properties of the membrane associated cytoskeleton. This is Amphiphysin (AMPH) from Gallus gallus (Chicken).